Reading from the N-terminus, the 359-residue chain is Phospho-N-acetylmuramoyl-pentapeptide-transferase (359 aa).

The next 10 membrane-spanning stretches (helical) occupy residues 7-27, 28-48, 82-102, 103-123, 147-167, 179-199, 203-223, 229-249, 256-276, and 337-357; these read RSLT…VNSY, IFNS…SLVI, MGGI…NNYV, DSVG…IGFL, ALIA…NPLI, IVIF…VNLT, DGLA…EIFI, LIIY…FLKY, IFMG…ISIL, and IVEN…VLKI.

The protein belongs to the glycosyltransferase 4 family. MraY subfamily. Mg(2+) is required as a cofactor.

Its subcellular location is the cell inner membrane. The catalysed reaction is UDP-N-acetyl-alpha-D-muramoyl-L-alanyl-gamma-D-glutamyl-meso-2,6-diaminopimeloyl-D-alanyl-D-alanine + di-trans,octa-cis-undecaprenyl phosphate = di-trans,octa-cis-undecaprenyl diphospho-N-acetyl-alpha-D-muramoyl-L-alanyl-D-glutamyl-meso-2,6-diaminopimeloyl-D-alanyl-D-alanine + UMP. It functions in the pathway cell wall biogenesis; peptidoglycan biosynthesis. In terms of biological role, catalyzes the initial step of the lipid cycle reactions in the biosynthesis of the cell wall peptidoglycan: transfers peptidoglycan precursor phospho-MurNAc-pentapeptide from UDP-MurNAc-pentapeptide onto the lipid carrier undecaprenyl phosphate, yielding undecaprenyl-pyrophosphoryl-MurNAc-pentapeptide, known as lipid I. The chain is Phospho-N-acetylmuramoyl-pentapeptide-transferase from Prochlorococcus marinus subsp. pastoris (strain CCMP1986 / NIES-2087 / MED4).